The following is an 882-amino-acid chain: DNA mismatch repair protein MutS (882 aa).

Residues Met1–Tyr22 form a disordered region. Gly662–Ser669 serves as a coordination point for ATP.

The protein belongs to the DNA mismatch repair MutS family.

Its function is as follows. This protein is involved in the repair of mismatches in DNA. It is possible that it carries out the mismatch recognition step. This protein has a weak ATPase activity. The polypeptide is DNA mismatch repair protein MutS (Microcystis aeruginosa (strain NIES-843 / IAM M-2473)).